The chain runs to 249 residues: Small ribosomal subunit protein uS2 (249 aa).

It belongs to the universal ribosomal protein uS2 family.

This chain is Small ribosomal subunit protein uS2, found in Polynucleobacter necessarius subsp. necessarius (strain STIR1).